A 707-amino-acid chain; its full sequence is NADP(+)-dependent formate dehydrogenase subunit beta (707 aa).

As to quaternary structure, heterotetramer composed of two alpha (FdhA) and two beta (FdhB) subunits.

The protein localises to the cytoplasm. The enzyme catalyses formate + NADP(+) = CO2 + NADPH. Activity is very sensitive to oxygen. The activity in growing cells is enhanced when selenite and molybdate are added together to the growth medium. Tungstate replaces and is better than molybdate. Selenite is incorporated into the enzyme. Requires a sulfhydryl compound for activity. Inhibited by cyanide, EDTA, hypophosphite and mercaptoethanol. Sulfite inhibits the activity with NADP but not with methyl viologen as electron acceptor. Component of a dehydrogenase that catalyzes the NADP-dependent reduction of CO(2) to formate, the first step in the synthesis of the methyl group of acetate during synthesis of acetate from CO(2). In vitro, can use methyl viologen and benzyl viologen in addition to its natural electron acceptor. The sequence is that of NADP(+)-dependent formate dehydrogenase subunit beta from Moorella thermoacetica (Clostridium thermoaceticum).